The primary structure comprises 357 residues: NmrA-like family domain-containing oxidoreductase notA' (357 aa).

Residues 13–18 (GATGAQ), 39–43 (RKPES), 60–61 (DG), 81–83 (TNS), Lys-140, and 164–167 (YMDV) contribute to the NADP(+) site.

This sequence belongs to the NmrA-type oxidoreductase family.

Its function is as follows. NmrA-like family domain-containing oxidoreductase; part of the gene cluster that mediates the biosynthesis of notoamide, a fungal indole alkaloid that belongs to a family of natural products containing a characteristic bicyclo[2.2.2]diazaoctane core. The first step of notoamide biosynthesis involves coupling of L-proline and L-tryptophan by the bimodular NRPS notE', to produce cyclo-L-tryptophan-L-proline called brevianamide F. The reverse prenyltransferase notF' then acts as a deoxybrevianamide E synthase and converts brevianamide F to deoxybrevianamide E via reverse prenylation at C-2 of the indole ring leading to the bicyclo[2.2.2]diazaoctane core. Deoxybrevianamide E is further hydroxylated at C-6 of the indole ring, likely catalyzed by the cytochrome P450 monooxygenase notG', to yield 6-hydroxy-deoxybrevianamide E. 6-hydroxy-deoxybrevianamide E is a specific substrate of the prenyltransferase notC' for normal prenylation at C-7 to produce 6-hydroxy-7-prenyl-deoxybrevianamide, also called notoamide S. As the proposed pivotal branching point in notoamide biosynthesis, notoamide S can be diverted to notoamide E through an oxidative pyran ring closure putatively catalyzed by either notH' cytochrome P450 monooxygenase or the notD' FAD-linked oxidoreductase. This step would be followed by an indole 2,3-epoxidation-initiated pinacol-like rearrangement catalyzed by the notB' FAD-dependent monooxygenase leading to the formation of notoamide C and notoamide D. On the other hand notoamide S is converted to notoamide T by notH' (or notD'), a bifunctional oxidase that also functions as the intramolecular Diels-Alderase responsible for generation of (-)-notoamide T. To generate antipodal (+)-notoaminide T, notH (or notD) in Aspergillus strain MF297-2 is expected to catalyze a Diels-Alder reaction leading to the opposite stereochemistry. The remaining oxidoreductase notD' (or notH') likely catalyzes the oxidative pyran ring formation to yield (-)-stephacidin A. The FAD-dependent monooxygenase notI' is highly similar to notB' and is predicted to catalyze a similar conversion from (-)-stephacidin A to (+)-notoamide B via the 2,3-epoxidation of (-)-stephacidin A followed by a pinacol-type rearrangement. Finally, it remains unclear which enzyme could be responsible for the final hydroxylation steps leading to notoamide A and sclerotiamide. This Aspergillus versicolor protein is NmrA-like family domain-containing oxidoreductase notA'.